Here is a 278-residue protein sequence, read N- to C-terminus: Small ribosomal subunit protein uS2 (278 aa).

Positions 233–258 (IDMEAAGEAPANKGKKKSAKARLDKS) are disordered.

Belongs to the universal ribosomal protein uS2 family.

The sequence is that of Small ribosomal subunit protein uS2 from Bacteroides fragilis (strain ATCC 25285 / DSM 2151 / CCUG 4856 / JCM 11019 / LMG 10263 / NCTC 9343 / Onslow / VPI 2553 / EN-2).